The chain runs to 190 residues: Elongation factor P-like protein (190 aa).

The protein belongs to the elongation factor P family.

The sequence is that of Elongation factor P-like protein from Klebsiella pneumoniae subsp. pneumoniae (strain ATCC 700721 / MGH 78578).